An 870-amino-acid polypeptide reads, in one-letter code: Alanine--tRNA ligase (870 aa).

Zn(2+)-binding residues include histidine 585, histidine 589, cysteine 689, and histidine 693.

Belongs to the class-II aminoacyl-tRNA synthetase family. Zn(2+) serves as cofactor.

Its subcellular location is the cytoplasm. The catalysed reaction is tRNA(Ala) + L-alanine + ATP = L-alanyl-tRNA(Ala) + AMP + diphosphate. Catalyzes the attachment of alanine to tRNA(Ala) in a two-step reaction: alanine is first activated by ATP to form Ala-AMP and then transferred to the acceptor end of tRNA(Ala). Also edits incorrectly charged Ser-tRNA(Ala) and Gly-tRNA(Ala) via its editing domain. The chain is Alanine--tRNA ligase from Picrophilus torridus (strain ATCC 700027 / DSM 9790 / JCM 10055 / NBRC 100828 / KAW 2/3).